Here is a 722-residue protein sequence, read N- to C-terminus: uncharacterized protein (722 aa).

Catalysis depends on charge relay system residues Ser575, Asp658, and His691.

The protein belongs to the peptidase S9B family.

This is an uncharacterized protein from Rickettsia prowazekii (strain Madrid E).